The following is a 241-amino-acid chain: NH(3)-dependent NAD(+) synthetase (241 aa).

27–34 (GISGGIDS) contacts ATP. D33 lines the Mg(2+) pocket. R109 is a binding site for deamido-NAD(+). T129 is an ATP binding site. E134 is a Mg(2+) binding site. K142 and D149 together coordinate deamido-NAD(+). K158 and T180 together coordinate ATP. A deamido-NAD(+)-binding site is contributed by 231–232 (HK).

This sequence belongs to the NAD synthetase family. Homodimer.

The catalysed reaction is deamido-NAD(+) + NH4(+) + ATP = AMP + diphosphate + NAD(+) + H(+). The protein operates within cofactor biosynthesis; NAD(+) biosynthesis; NAD(+) from deamido-NAD(+) (ammonia route): step 1/1. Functionally, catalyzes the ATP-dependent amidation of deamido-NAD to form NAD. Uses ammonia as a nitrogen source. The protein is NH(3)-dependent NAD(+) synthetase of Thermoplasma acidophilum (strain ATCC 25905 / DSM 1728 / JCM 9062 / NBRC 15155 / AMRC-C165).